The sequence spans 685 residues: tRNA 5-methylaminomethyl-2-thiouridine biosynthesis bifunctional protein MnmC (685 aa).

The interval 1-272 is tRNA (mnm(5)s(2)U34)-methyltransferase; sequence MTAEPNKPCQ…MAAILSSATQ (272 aa). Residues 278 to 685 form an FAD-dependent cmnm(5)s(2)U34 oxidoreductase region; the sequence is IGGGLASAHL…LRKLLKGKAL (408 aa).

In the N-terminal section; belongs to the methyltransferase superfamily. tRNA (mnm(5)s(2)U34)-methyltransferase family. The protein in the C-terminal section; belongs to the DAO family. Requires FAD as cofactor.

It localises to the cytoplasm. It carries out the reaction 5-aminomethyl-2-thiouridine(34) in tRNA + S-adenosyl-L-methionine = 5-methylaminomethyl-2-thiouridine(34) in tRNA + S-adenosyl-L-homocysteine + H(+). Its function is as follows. Catalyzes the last two steps in the biosynthesis of 5-methylaminomethyl-2-thiouridine (mnm(5)s(2)U) at the wobble position (U34) in tRNA. Catalyzes the FAD-dependent demodification of cmnm(5)s(2)U34 to nm(5)s(2)U34, followed by the transfer of a methyl group from S-adenosyl-L-methionine to nm(5)s(2)U34, to form mnm(5)s(2)U34. This is tRNA 5-methylaminomethyl-2-thiouridine biosynthesis bifunctional protein MnmC from Shewanella baltica (strain OS185).